Reading from the N-terminus, the 220-residue chain is Ribosomal RNA large subunit methyltransferase E (220 aa).

Gly60, Trp62, Asp92, Asp108, and Asp133 together coordinate S-adenosyl-L-methionine. Lys173 acts as the Proton acceptor in catalysis.

This sequence belongs to the class I-like SAM-binding methyltransferase superfamily. RNA methyltransferase RlmE family.

The protein resides in the cytoplasm. It catalyses the reaction uridine(2552) in 23S rRNA + S-adenosyl-L-methionine = 2'-O-methyluridine(2552) in 23S rRNA + S-adenosyl-L-homocysteine + H(+). Functionally, specifically methylates the uridine in position 2552 of 23S rRNA at the 2'-O position of the ribose in the fully assembled 50S ribosomal subunit. This is Ribosomal RNA large subunit methyltransferase E from Paraburkholderia phytofirmans (strain DSM 17436 / LMG 22146 / PsJN) (Burkholderia phytofirmans).